The primary structure comprises 282 residues: Bifunctional protein FolD (282 aa).

Residues 165–167 (GRG), threonine 192, and valine 233 each bind NADP(+).

It belongs to the tetrahydrofolate dehydrogenase/cyclohydrolase family. Homodimer.

The enzyme catalyses (6R)-5,10-methylene-5,6,7,8-tetrahydrofolate + NADP(+) = (6R)-5,10-methenyltetrahydrofolate + NADPH. It carries out the reaction (6R)-5,10-methenyltetrahydrofolate + H2O = (6R)-10-formyltetrahydrofolate + H(+). It functions in the pathway one-carbon metabolism; tetrahydrofolate interconversion. Catalyzes the oxidation of 5,10-methylenetetrahydrofolate to 5,10-methenyltetrahydrofolate and then the hydrolysis of 5,10-methenyltetrahydrofolate to 10-formyltetrahydrofolate. This is Bifunctional protein FolD from Mycobacterium leprae (strain Br4923).